A 960-amino-acid polypeptide reads, in one-letter code: Probable glutamyl endopeptidase, chloroplastic (960 aa).

Residues 1–62 (MMRFHKACHR…FSENPLTTVM (62 aa)) constitute a chloroplast transit peptide. The disordered stretch occupies residues 78-98 (SGGAEDGGGTSNGSLSASATA). Polar residues predominate over residues 89–98 (NGSLSASATA). Catalysis depends on charge relay system residues S780, D854, and H888. Residues 915–960 (TSDADTSPDQSKEGSDSADKVSTGTGGGNPEFGEHEVHSKLRRSLL) form a disordered region. Basic and acidic residues predominate over residues 924 to 933 (QSKEGSDSAD).

It belongs to the peptidase S9D family.

The protein localises to the plastid. The protein resides in the chloroplast stroma. Serine-type protease active in vitro against the LHCII N-terminal. Cleaves its substrate on the carboxy-side of Glu residues. The polypeptide is Probable glutamyl endopeptidase, chloroplastic (GEP) (Arabidopsis thaliana (Mouse-ear cress)).